The following is a 174-amino-acid chain: Superoxide dismutase [Cu-Zn] (174 aa).

Residues 1–20 (MMKSLFIASTMVLMAFPAFA) form the signal peptide. Cu cation-binding residues include histidine 68, histidine 70, and histidine 93. Residues cysteine 75 and cysteine 170 are joined by a disulfide bond. Zn(2+) contacts are provided by histidine 93, histidine 102, histidine 110, and aspartate 113. Histidine 148 is a binding site for Cu cation.

Belongs to the Cu-Zn superoxide dismutase family. In terms of assembly, homodimer. Requires Cu cation as cofactor. The cofactor is Zn(2+).

It is found in the periplasm. The enzyme catalyses 2 superoxide + 2 H(+) = H2O2 + O2. Its function is as follows. Destroys radicals which are normally produced within the cells and which are toxic to biological systems. This chain is Superoxide dismutase [Cu-Zn] (sodC), found in Brucella melitensis biotype 1 (strain ATCC 23456 / CCUG 17765 / NCTC 10094 / 16M).